The chain runs to 355 residues: UDP-N-acetylglucosamine--N-acetylmuramyl-(pentapeptide) pyrophosphoryl-undecaprenol N-acetylglucosamine transferase (355 aa).

Residues 15 to 17, Asn-127, Arg-163, Ser-191, Ile-244, 263 to 268, and Gln-288 each bind UDP-N-acetyl-alpha-D-glucosamine; these read TGG and ALTVSE.

It belongs to the glycosyltransferase 28 family. MurG subfamily.

It is found in the cell inner membrane. The enzyme catalyses di-trans,octa-cis-undecaprenyl diphospho-N-acetyl-alpha-D-muramoyl-L-alanyl-D-glutamyl-meso-2,6-diaminopimeloyl-D-alanyl-D-alanine + UDP-N-acetyl-alpha-D-glucosamine = di-trans,octa-cis-undecaprenyl diphospho-[N-acetyl-alpha-D-glucosaminyl-(1-&gt;4)]-N-acetyl-alpha-D-muramoyl-L-alanyl-D-glutamyl-meso-2,6-diaminopimeloyl-D-alanyl-D-alanine + UDP + H(+). Its pathway is cell wall biogenesis; peptidoglycan biosynthesis. Its function is as follows. Cell wall formation. Catalyzes the transfer of a GlcNAc subunit on undecaprenyl-pyrophosphoryl-MurNAc-pentapeptide (lipid intermediate I) to form undecaprenyl-pyrophosphoryl-MurNAc-(pentapeptide)GlcNAc (lipid intermediate II). The polypeptide is UDP-N-acetylglucosamine--N-acetylmuramyl-(pentapeptide) pyrophosphoryl-undecaprenol N-acetylglucosamine transferase (Sodalis glossinidius (strain morsitans)).